A 555-amino-acid polypeptide reads, in one-letter code: Glutamine--tRNA ligase (555 aa).

The 'HIGH' region signature appears at 34–44 (PEPNGYLHIGH). Residues 35-37 (EPN) and 41-47 (HIGHAKS) contribute to the ATP site. Residues Asp67 and Tyr212 each coordinate L-glutamine. ATP-binding positions include Thr231, 261-262 (RL), and 269-271 (MSK). Residues 268-272 (VMSKR) carry the 'KMSKS' region motif. The segment at 317–324 (TKQDNTIE) is interaction with tRNA.

The protein belongs to the class-I aminoacyl-tRNA synthetase family. In terms of assembly, monomer.

It localises to the cytoplasm. It carries out the reaction tRNA(Gln) + L-glutamine + ATP = L-glutaminyl-tRNA(Gln) + AMP + diphosphate. In Salmonella agona (strain SL483), this protein is Glutamine--tRNA ligase.